Consider the following 84-residue polypeptide: U8-theraphotoxin-Hhn1e (84 aa).

The first 21 residues, 1-21 (MKVVLLVCLVWMMAMMELVSC), serve as a signal peptide directing secretion. Intrachain disulfides connect Cys-23–Cys-35, Cys-29–Cys-44, Cys-34–Cys-67, Cys-54–Cys-75, and Cys-69–Cys-81.

Belongs to the AVIT (prokineticin) family. Expressed by the venom gland.

The protein localises to the secreted. The protein is U8-theraphotoxin-Hhn1e of Cyriopagopus hainanus (Chinese bird spider).